The sequence spans 61 residues: Protein translocase subunit SecE (61 aa).

The Cytoplasmic segment spans residues 1-34; that stretch reads MAELQERIRHFWKESRRAFLVTKKPNWATYKRAA. The chain crosses the membrane as a helical span at residues 35-55; that stretch reads KITGLGIILIGLIGMLIRIVG. Residues 56–61 are Extracellular-facing; that stretch reads ILILGG.

This sequence belongs to the SecE/SEC61-gamma family. Component of the Sec protein translocase complex. Heterotrimer consisting of alpha (SecY), beta (SecG) and gamma (SecE) subunits. The heterotrimers can form oligomers, although 1 heterotrimer is thought to be able to translocate proteins. Interacts with the ribosome. May interact with SecDF, and other proteins may be involved.

It is found in the cell membrane. In terms of biological role, essential subunit of the protein translocation channel SecYEG. Clamps together the 2 halves of SecY. May contact the channel plug during translocation. In Pyrococcus furiosus (strain ATCC 43587 / DSM 3638 / JCM 8422 / Vc1), this protein is Protein translocase subunit SecE.